The following is a 175-amino-acid chain: MTIILGIDPGSRFTGYGVIKQEKQRFTYLGSGCIKAMSQGEDLASRLQTIFAGVSELIIQFKPDMFAIEQVFMGVNPGGALKLGQARGAAIVAATNSGLTIAEYSARQIKQAVVGTGAADKNQVQHMVKSILKLPGTPQADAADALAVALCHGHSHTSAAILAGQATKIVRGRLR.

Residues D8, E69, and D141 contribute to the active site. Mg(2+) contacts are provided by D8, E69, and D141.

This sequence belongs to the RuvC family. In terms of assembly, homodimer which binds Holliday junction (HJ) DNA. The HJ becomes 2-fold symmetrical on binding to RuvC with unstacked arms; it has a different conformation from HJ DNA in complex with RuvA. In the full resolvosome a probable DNA-RuvA(4)-RuvB(12)-RuvC(2) complex forms which resolves the HJ. Mg(2+) is required as a cofactor.

It localises to the cytoplasm. The catalysed reaction is Endonucleolytic cleavage at a junction such as a reciprocal single-stranded crossover between two homologous DNA duplexes (Holliday junction).. Its function is as follows. The RuvA-RuvB-RuvC complex processes Holliday junction (HJ) DNA during genetic recombination and DNA repair. Endonuclease that resolves HJ intermediates. Cleaves cruciform DNA by making single-stranded nicks across the HJ at symmetrical positions within the homologous arms, yielding a 5'-phosphate and a 3'-hydroxyl group; requires a central core of homology in the junction. The consensus cleavage sequence is 5'-(A/T)TT(C/G)-3'. Cleavage occurs on the 3'-side of the TT dinucleotide at the point of strand exchange. HJ branch migration catalyzed by RuvA-RuvB allows RuvC to scan DNA until it finds its consensus sequence, where it cleaves and resolves the cruciform DNA. The polypeptide is Crossover junction endodeoxyribonuclease RuvC (Colwellia psychrerythraea (strain 34H / ATCC BAA-681) (Vibrio psychroerythus)).